Consider the following 153-residue polypeptide: Actin-related protein 2/3 complex subunit 5-like protein (153 aa).

Residue Ser-64 is modified to Phosphoserine.

It belongs to the ARPC5 family. May be a component of the Arp2/3 complex in which it may replace ARPC5.

It is found in the cytoplasm. The protein resides in the cytoskeleton. In terms of biological role, may function as component of the Arp2/3 complex which is involved in regulation of actin polymerization and together with an activating nucleation-promoting factor (NPF) mediates the formation of branched actin networks. In Pongo abelii (Sumatran orangutan), this protein is Actin-related protein 2/3 complex subunit 5-like protein (ARPC5L).